The primary structure comprises 196 residues: ATP-dependent Clp protease proteolytic subunit (196 aa).

Ser101 acts as the Nucleophile in catalysis. Residue His126 is part of the active site.

It belongs to the peptidase S14 family. As to quaternary structure, component of the chloroplastic Clp protease core complex.

The protein resides in the plastid. The protein localises to the chloroplast stroma. The enzyme catalyses Hydrolysis of proteins to small peptides in the presence of ATP and magnesium. alpha-casein is the usual test substrate. In the absence of ATP, only oligopeptides shorter than five residues are hydrolyzed (such as succinyl-Leu-Tyr-|-NHMec, and Leu-Tyr-Leu-|-Tyr-Trp, in which cleavage of the -Tyr-|-Leu- and -Tyr-|-Trp bonds also occurs).. Its function is as follows. Cleaves peptides in various proteins in a process that requires ATP hydrolysis. Has a chymotrypsin-like activity. Plays a major role in the degradation of misfolded proteins. The chain is ATP-dependent Clp protease proteolytic subunit from Spinacia oleracea (Spinach).